Reading from the N-terminus, the 332-residue chain is Holliday junction branch migration complex subunit RuvB (332 aa).

The large ATPase domain (RuvB-L) stretch occupies residues 1–181 (MARILDNDVM…FGITGHMEYY (181 aa)). ATP contacts are provided by residues leucine 20, arginine 21, glycine 62, lysine 65, threonine 66, threonine 67, 128-130 (EDF), arginine 171, tyrosine 181, and arginine 218. Threonine 66 is a binding site for Mg(2+). Residues 182–252 (QEKDLTEIVE…ITDRALTMLD (71 aa)) are small ATPAse domain (RuvB-S). Residues 255–332 (REGLDYIDQK…RHLGYPYQNT (78 aa)) are head domain (RuvB-H). The DNA site is built by arginine 291, arginine 310, arginine 312, and arginine 315.

It belongs to the RuvB family. In terms of assembly, homohexamer. Forms an RuvA(8)-RuvB(12)-Holliday junction (HJ) complex. HJ DNA is sandwiched between 2 RuvA tetramers; dsDNA enters through RuvA and exits via RuvB. An RuvB hexamer assembles on each DNA strand where it exits the tetramer. Each RuvB hexamer is contacted by two RuvA subunits (via domain III) on 2 adjacent RuvB subunits; this complex drives branch migration. In the full resolvosome a probable DNA-RuvA(4)-RuvB(12)-RuvC(2) complex forms which resolves the HJ.

The protein resides in the cytoplasm. It carries out the reaction ATP + H2O = ADP + phosphate + H(+). In terms of biological role, the RuvA-RuvB-RuvC complex processes Holliday junction (HJ) DNA during genetic recombination and DNA repair, while the RuvA-RuvB complex plays an important role in the rescue of blocked DNA replication forks via replication fork reversal (RFR). RuvA specifically binds to HJ cruciform DNA, conferring on it an open structure. The RuvB hexamer acts as an ATP-dependent pump, pulling dsDNA into and through the RuvAB complex. RuvB forms 2 homohexamers on either side of HJ DNA bound by 1 or 2 RuvA tetramers; 4 subunits per hexamer contact DNA at a time. Coordinated motions by a converter formed by DNA-disengaged RuvB subunits stimulates ATP hydrolysis and nucleotide exchange. Immobilization of the converter enables RuvB to convert the ATP-contained energy into a lever motion, pulling 2 nucleotides of DNA out of the RuvA tetramer per ATP hydrolyzed, thus driving DNA branch migration. The RuvB motors rotate together with the DNA substrate, which together with the progressing nucleotide cycle form the mechanistic basis for DNA recombination by continuous HJ branch migration. Branch migration allows RuvC to scan DNA until it finds its consensus sequence, where it cleaves and resolves cruciform DNA. This is Holliday junction branch migration complex subunit RuvB from Streptococcus pyogenes serotype M3 (strain ATCC BAA-595 / MGAS315).